An 897-amino-acid polypeptide reads, in one-letter code: Beta-galactosidase (897 aa).

Catalysis depends on Glu459, which acts as the Proton donor. The active-site Nucleophile is the Glu525.

It belongs to the glycosyl hydrolase 2 family.

It catalyses the reaction Hydrolysis of terminal non-reducing beta-D-galactose residues in beta-D-galactosides.. This chain is Beta-galactosidase (cbgA), found in Clostridium acetobutylicum.